The primary structure comprises 227 residues: Enolase-phosphatase E1 (227 aa).

Belongs to the HAD-like hydrolase superfamily. MasA/MtnC family. Monomer. Mg(2+) serves as cofactor.

The enzyme catalyses 5-methylsulfanyl-2,3-dioxopentyl phosphate + H2O = 1,2-dihydroxy-5-(methylsulfanyl)pent-1-en-3-one + phosphate. It participates in amino-acid biosynthesis; L-methionine biosynthesis via salvage pathway; L-methionine from S-methyl-5-thio-alpha-D-ribose 1-phosphate: step 3/6. The protein operates within amino-acid biosynthesis; L-methionine biosynthesis via salvage pathway; L-methionine from S-methyl-5-thio-alpha-D-ribose 1-phosphate: step 4/6. Its function is as follows. Bifunctional enzyme that catalyzes the enolization of 2,3-diketo-5-methylthiopentyl-1-phosphate (DK-MTP-1-P) into the intermediate 2-hydroxy-3-keto-5-methylthiopentenyl-1-phosphate (HK-MTPenyl-1-P), which is then dephosphorylated to form the acireductone 1,2-dihydroxy-3-keto-5-methylthiopentene (DHK-MTPene). The polypeptide is Enolase-phosphatase E1 (Gluconobacter oxydans (strain 621H) (Gluconobacter suboxydans)).